A 627-amino-acid polypeptide reads, in one-letter code: Membrane protein insertase YidC (627 aa).

The next 6 helical transmembrane spans lie at 3 to 23 (KNTVIGLVLIGLVIFGFSWLN), 376 to 396 (WGLIILLLTLGIKLLISPLAY), 450 to 470 (LPMLLQFPFLIAMYMYFPTTI), 502 to 522 (FYGNHVSLFCLLMSISNILYI), 534 to 554 (EGMAMLKWMPYITTVMFLFFF), and 558 to 578 (ASGLCYYYFLSSIITVIQYMS).

The protein belongs to the OXA1/ALB3/YidC family. Type 1 subfamily. As to quaternary structure, interacts with the Sec translocase complex via SecD. Specifically interacts with transmembrane segments of nascent integral membrane proteins during membrane integration.

The protein resides in the cell inner membrane. Functionally, required for the insertion and/or proper folding and/or complex formation of integral membrane proteins into the membrane. Involved in integration of membrane proteins that insert both dependently and independently of the Sec translocase complex, as well as at least some lipoproteins. Aids folding of multispanning membrane proteins. This Porphyromonas gingivalis (strain ATCC BAA-308 / W83) protein is Membrane protein insertase YidC.